We begin with the raw amino-acid sequence, 219 residues long: uncharacterized protein (219 aa).

The tract at residues 70–102 is disordered; sequence VHIGDNHPEPKNESKTQPKIESKKEPTLKQEEQ. The span at 73 to 101 shows a compositional bias: basic and acidic residues; the sequence is GDNHPEPKNESKTQPKIESKKEPTLKQEE. Positions 96 to 120 form a coiled coil; the sequence is TLKQEEQTIQAEEEAQKIAKEETRE. Transmembrane regions (helical) follow at residues 126 to 146, 153 to 173, and 192 to 212; these read GGEI…VNML, IFGL…VIVL, and TYGV…AIFF.

The protein localises to the membrane. This is an uncharacterized protein from Acanthamoeba polyphaga mimivirus (APMV).